A 228-amino-acid chain; its full sequence is Delta-type opioid receptor (228 aa).

The helical transmembrane segment at 1-3 (GIV) threads the bilayer. Residues 4 to 13 (RYTKMKTATN) are Cytoplasmic-facing. The helical transmembrane segment at 14 to 38 (IYIFNLALADALATSTLPFQSAKYL) threads the bilayer. Topologically, residues 39 to 50 (METWPFGELLCK) are extracellular. The cysteines at positions 49 and 126 are disulfide-linked. The chain crosses the membrane as a helical span at residues 51–72 (AVLSIDYYNMFTSIFTLTMMSV). Over 73–91 (DRYIAVCHPVKALDFRTPA) the chain is Cytoplasmic. The chain crosses the membrane as a helical span at residues 92–114 (KAKLINICIWVLASGVGVPIMVM). The Extracellular portion of the chain corresponds to 115–134 (AVTRPRDGAVVCMLQFPSPS). Residues 135-166 (WYWDTVTKICVFLFAFVVPILVITVCYGLMLL) form a helical membrane-spanning segment. Topologically, residues 167 to 189 (RLRSVRLLSGSKEKDRSLRRITR) are cytoplasmic. Residues 190-212 (MVLVVVGAFVVCWAPIHIFVIVW) traverse the membrane as a helical segment. The Extracellular segment spans residues 213-227 (TLVDIDRRDPLVVAA).

The protein belongs to the G-protein coupled receptor 1 family. As to quaternary structure, may form homooligomers. Forms a heterodimer with OPRM1. Interacts with GPRASP1. Interacts with RTP4; the interaction promotes cell surface localization of the OPRD1-OPRM1 heterodimer. Post-translationally, ubiquitinated. A basal ubiquitination seems not to be related to degradation. Ubiquitination is increased upon formation of OPRM1:OPRD1 oligomers leading to proteasomal degradation; the ubiquitination is diminished by RTP4. As to expression, detected in myenteric plexus and smooth muscle (at protein level). Detected in brain and intestine.

The protein localises to the cell membrane. Functionally, G-protein coupled receptor that functions as a receptor for endogenous enkephalins and for a subset of other opioids. Ligand binding causes a conformation change that triggers signaling via guanine nucleotide-binding proteins (G proteins) and modulates the activity of down-stream effectors, such as adenylate cyclase. Signaling leads to the inhibition of adenylate cyclase activity. Inhibits neurotransmitter release by reducing calcium ion currents and increasing potassium ion conductance. Plays a role in the perception of pain and in opiate-mediated analgesia. Plays a role in developing analgesic tolerance to morphine. In Sus scrofa (Pig), this protein is Delta-type opioid receptor (OPRD1).